The sequence spans 534 residues: Peptide chain release factor 3 (534 aa).

In terms of domain architecture, tr-type G spans 9–278 (SRRRTFAIIS…FFVEHAPPPQ (270 aa)). GTP-binding positions include 18-25 (SHPDAGKT), 86-90 (DTPGH), and 140-143 (NKLD).

Belongs to the TRAFAC class translation factor GTPase superfamily. Classic translation factor GTPase family. PrfC subfamily.

Its subcellular location is the cytoplasm. Its function is as follows. Increases the formation of ribosomal termination complexes and stimulates activities of RF-1 and RF-2. It binds guanine nucleotides and has strong preference for UGA stop codons. It may interact directly with the ribosome. The stimulation of RF-1 and RF-2 is significantly reduced by GTP and GDP, but not by GMP. The chain is Peptide chain release factor 3 from Stenotrophomonas maltophilia (strain R551-3).